Here is a 238-residue protein sequence, read N- to C-terminus: Orotidine 5'-phosphate decarboxylase (238 aa).

Substrate is bound by residues aspartate 10, lysine 32, 59–68 (DLKLHDIPNT), threonine 122, arginine 184, glutamine 193, glycine 213, and arginine 214. Residue lysine 61 is the Proton donor of the active site.

Belongs to the OMP decarboxylase family. Type 1 subfamily. As to quaternary structure, homodimer.

The enzyme catalyses orotidine 5'-phosphate + H(+) = UMP + CO2. It functions in the pathway pyrimidine metabolism; UMP biosynthesis via de novo pathway; UMP from orotate: step 2/2. Functionally, catalyzes the decarboxylation of orotidine 5'-monophosphate (OMP) to uridine 5'-monophosphate (UMP). This is Orotidine 5'-phosphate decarboxylase from Bacillus cereus (strain B4264).